We begin with the raw amino-acid sequence, 404 residues long: Retrotransposable element SLACS 45 kDa protein (404 aa).

2 stretches are compositionally biased toward polar residues: residues 1 to 11 (MVRNLRSSEPQ) and 29 to 41 (PALNLQWPGQKQV). 5 disordered regions span residues 1-62 (MVRN…NTSI), 86-111 (KKAAHSPLKTKPVNKEGNRKKYGRPP), 134-251 (LGKG…KKGA), 317-341 (CRQQHPGGPPDSLHPDNNRESGAVS), and 369-404 (PKLPVPEQGDYPNARSGIGTGAPHSPHHCDRSAGPP). Residues 98 to 111 (VNKEGNRKKYGRPP) are compositionally biased toward basic and acidic residues. A compositionally biased stretch (polar residues) spans 141–151 (TAHTKSNQSRV). Residues 300 to 321 (CPVCGFAHPEETITVTHCRQQH) form a C2H2-type zinc finger. Over residues 395-404 (HHCDRSAGPP) the composition is skewed to basic and acidic residues.

The sequence is that of Retrotransposable element SLACS 45 kDa protein from Trypanosoma brucei gambiense.